Here is a 456-residue protein sequence, read N- to C-terminus: Exodeoxyribonuclease 7 large subunit (456 aa).

This sequence belongs to the XseA family. In terms of assembly, heterooligomer composed of large and small subunits.

The protein localises to the cytoplasm. The catalysed reaction is Exonucleolytic cleavage in either 5'- to 3'- or 3'- to 5'-direction to yield nucleoside 5'-phosphates.. Bidirectionally degrades single-stranded DNA into large acid-insoluble oligonucleotides, which are then degraded further into small acid-soluble oligonucleotides. In Lactobacillus delbrueckii subsp. bulgaricus (strain ATCC 11842 / DSM 20081 / BCRC 10696 / JCM 1002 / NBRC 13953 / NCIMB 11778 / NCTC 12712 / WDCM 00102 / Lb 14), this protein is Exodeoxyribonuclease 7 large subunit.